The primary structure comprises 450 residues: Glutathione reductase (450 aa).

FAD is bound by residues S14, G15, E34, T41, C42, and K50. S14 contacts glutathione. Residues C42 and C47 are joined by a disulfide bond. Y99 is a glutathione binding site. Position 115 (A115) interacts with FAD. 6 residues coordinate NADP(+): A175, I178, E181, R198, R204, and G262. D303 lines the FAD pocket. E309 is a binding site for NADP(+). Position 311 (T311) interacts with FAD. Residue R319 coordinates glutathione. V342 contacts NADP(+). H439 contributes to the FAD binding site. H439 (proton acceptor) is an active-site residue.

The protein belongs to the class-I pyridine nucleotide-disulfide oxidoreductase family. Homodimer. FAD serves as cofactor.

The protein resides in the cytoplasm. It catalyses the reaction 2 glutathione + NADP(+) = glutathione disulfide + NADPH + H(+). Functionally, catalyzes the reduction of glutathione disulfide (GSSG) to reduced glutathione (GSH). Constitutes the major mechanism to maintain a high GSH:GSSG ratio in the cytosol. This chain is Glutathione reductase (gor), found in Escherichia coli (strain K12).